We begin with the raw amino-acid sequence, 205 residues long: Putative 3-methyladenine DNA glycosylase (205 aa).

The protein belongs to the DNA glycosylase MPG family.

The sequence is that of Putative 3-methyladenine DNA glycosylase from Bacillus cereus (strain G9842).